We begin with the raw amino-acid sequence, 65 residues long: Cold shock-like protein CspB (65 aa).

A CSD domain is found at 3-62 (GKVKWFNNEKGFGFIEMEGSEDVFVHFSAIQSDGYKALEEGQEVSFDITEGNRGPQAANV).

Homodimer.

It localises to the cytoplasm. The polypeptide is Cold shock-like protein CspB (cspB) (Bacillus cereus).